The chain runs to 436 residues: uncharacterized protein (436 aa).

This is an uncharacterized protein from Arabidopsis thaliana (Mouse-ear cress).